The primary structure comprises 397 residues: Urea transporter 2 (397 aa).

5 helical membrane-spanning segments follow: residues 68–85 (VMFV…IGLF), 92–109 (AIAG…ALIL), 115–135 (AIAS…IAVF), 143–163 (WWLL…SSAL), and 172–192 (LPVF…ATGH). N-linked (GlcNAc...) asparagine glycosylation occurs at N210. 5 helical membrane passes run 239–257 (WTGG…LICL), 264–280 (TMGM…FDSI), 287–303 (FNST…FYVI), 309–329 (LLAV…TNVL), and 331–351 (VFGL…FLLL).

Belongs to the urea transporter family. Kidney.

The protein resides in the apical cell membrane. The protein localises to the basolateral cell membrane. It catalyses the reaction urea(in) = urea(out). Its activity is regulated as follows. Inhibited by urea analogs and phloretin. In terms of biological role, mediates the transport of urea driven by a concentration gradient across the cell membrane of the renal inner medullary collecting duct which is critical to the urinary concentrating mechanism. In Oryctolagus cuniculus (Rabbit), this protein is Urea transporter 2 (SLC14A2).